The chain runs to 431 residues: UPF0597 protein LCA_0156 (431 aa).

Belongs to the UPF0597 family.

This chain is UPF0597 protein LCA_0156, found in Latilactobacillus sakei subsp. sakei (strain 23K) (Lactobacillus sakei subsp. sakei).